Here is a 369-residue protein sequence, read N- to C-terminus: Probable trehalose-phosphate phosphatase D (369 aa).

Positions 63 to 85 are disordered; sequence RASSPTRTRPGNISPLPESDEED.

It belongs to the trehalose phosphatase family. A divalent metal cation serves as cofactor.

It carries out the reaction alpha,alpha-trehalose 6-phosphate + H2O = alpha,alpha-trehalose + phosphate. It functions in the pathway glycan biosynthesis; trehalose biosynthesis. In terms of biological role, removes the phosphate from trehalose 6-phosphate to produce free trehalose. Trehalose accumulation in plant may improve abiotic stress tolerance. This is Probable trehalose-phosphate phosphatase D (TPPD) from Arabidopsis thaliana (Mouse-ear cress).